A 465-amino-acid polypeptide reads, in one-letter code: Ribulose bisphosphate carboxylase large chain (465 aa).

At K4 the chain carries N6,N6,N6-trimethyllysine. 2 residues coordinate substrate: N113 and T163. The Proton acceptor role is filled by K165. K167 contributes to the substrate binding site. 3 residues coordinate Mg(2+): K191, D193, and E194. Residue K191 is modified to N6-carboxylysine. Residue H284 is the Proton acceptor of the active site. The substrate site is built by R285, H317, and S369.

It belongs to the RuBisCO large chain family. Type I subfamily. As to quaternary structure, heterohexadecamer of 8 large chains and 8 small chains; disulfide-linked. The disulfide link is formed within the large subunit homodimers. The cofactor is Mg(2+). Post-translationally, the disulfide bond which can form in the large chain dimeric partners within the hexadecamer appears to be associated with oxidative stress and protein turnover.

It is found in the plastid. The protein localises to the chloroplast. The catalysed reaction is 2 (2R)-3-phosphoglycerate + 2 H(+) = D-ribulose 1,5-bisphosphate + CO2 + H2O. The enzyme catalyses D-ribulose 1,5-bisphosphate + O2 = 2-phosphoglycolate + (2R)-3-phosphoglycerate + 2 H(+). In terms of biological role, ruBisCO catalyzes two reactions: the carboxylation of D-ribulose 1,5-bisphosphate, the primary event in carbon dioxide fixation, as well as the oxidative fragmentation of the pentose substrate in the photorespiration process. Both reactions occur simultaneously and in competition at the same active site. This Bauera rubioides (Dog rose) protein is Ribulose bisphosphate carboxylase large chain.